A 264-amino-acid polypeptide reads, in one-letter code: MKKITINDLIKWKQEGRKFATSTAYDASFAQLFESQEMPVLLVGDSLGMVLQGKNDTLPVTVEDIAYHTRCVRAGSPNCLLMADMPFMSYATPEQACENAAQLMRAGANMVKIEGGDWLVDTVKMLTERAVPVCAHLGLTPQSVNIFGGYKVQGRDQEKADRMVKDALALQAAGAQIVLLECVPAELAARITQVLDVPVIGIGAGNVTDGQILVMHDMFGISANYMPKFSKNFLAETGDMRKAVALYMEQVQAGTFPDEAHTIA.

Positions 45 and 84 each coordinate Mg(2+). 3-methyl-2-oxobutanoate is bound by residues 45–46 (DS), aspartate 84, and lysine 112. Glutamate 114 contacts Mg(2+). Catalysis depends on glutamate 181, which acts as the Proton acceptor.

It belongs to the PanB family. Homodecamer; pentamer of dimers. Requires Mg(2+) as cofactor.

The protein localises to the cytoplasm. The enzyme catalyses 3-methyl-2-oxobutanoate + (6R)-5,10-methylene-5,6,7,8-tetrahydrofolate + H2O = 2-dehydropantoate + (6S)-5,6,7,8-tetrahydrofolate. It functions in the pathway cofactor biosynthesis; (R)-pantothenate biosynthesis; (R)-pantoate from 3-methyl-2-oxobutanoate: step 1/2. Its function is as follows. Catalyzes the reversible reaction in which hydroxymethyl group from 5,10-methylenetetrahydrofolate is transferred onto alpha-ketoisovalerate to form ketopantoate. In Vibrio vulnificus (strain YJ016), this protein is 3-methyl-2-oxobutanoate hydroxymethyltransferase.